The following is a 367-amino-acid chain: MVAVLTWALALLSAFATAQTQKGFWDYFSQSSGDKSKVARVQQQKLTWETTSLKDSLEQDLSNMDKFLEKLGPLSGQGREPPGLAHDPEGMRQQLQDELAEVRARLEPYMAEAHQQVGWNLEGLRRQLKPYTVELMEQVARRVQELQEQLRVVGEGTKAQLLGGVDEARGLLQELQTRVVQHTGRVRELFHPYAQRLVTGIGRHVQELHRSVAPHAAASSARLSRCVQTLSRKLTLKAEALHARIQQNLDQLREELSAFAGAGAGGAEEGANPDPQMLSQEVRQRLQAFRHDTFLQIADFTRAIDQETEEVQLQLAPPPPGHSAFAPEFLQADSSEARSKLQARLEDLWEDINDSLHDGGLSHLEEP.

The N-terminal stretch at 1–20 (MVAVLTWALALLSAFATAQT) is a signal peptide. The residue at position 56 (Ser-56) is a Phosphoserine.

It belongs to the apolipoprotein A1/A4/E family. As to quaternary structure, interacts with GPIHBP1. Interacts with SORL1; this interaction leads to APOA5 internalization and sorting either to lysosomes and degradation, or to the trans-Golgi network. In terms of processing, phosphorylated by FAM20C in the extracellular medium.

It localises to the secreted. It is found in the early endosome. Its subcellular location is the late endosome. The protein resides in the golgi apparatus. The protein localises to the trans-Golgi network. In terms of biological role, minor apolipoprotein mainly associated with HDL and to a lesser extent with VLDL. May also be associated with chylomicrons. Important determinant of plasma triglyceride (TG) levels by both being a potent stimulator of apo-CII lipoprotein lipase (LPL) TG hydrolysis and an inhibitor of the hepatic VLDL-TG production rate (without affecting the VLDL-apoB production rate). Activates poorly lecithin:cholesterol acyltransferase (LCAT) and does not enhance efflux of cholesterol from macrophages. Binds heparin. In Phoca vitulina (Harbor seal), this protein is Apolipoprotein A-V (APOA5).